The following is a 270-amino-acid chain: tRNA (guanine-N(1)-)-methyltransferase (270 aa).

Residues Gly117 and 137–142 (IGDYVL) each bind S-adenosyl-L-methionine.

It belongs to the RNA methyltransferase TrmD family. In terms of assembly, homodimer.

The protein resides in the cytoplasm. It catalyses the reaction guanosine(37) in tRNA + S-adenosyl-L-methionine = N(1)-methylguanosine(37) in tRNA + S-adenosyl-L-homocysteine + H(+). Functionally, specifically methylates guanosine-37 in various tRNAs. The sequence is that of tRNA (guanine-N(1)-)-methyltransferase from Heliobacterium modesticaldum (strain ATCC 51547 / Ice1).